We begin with the raw amino-acid sequence, 70 residues long: Large ribosomal subunit protein bL31 (70 aa).

Cys16, Cys18, Cys37, and Cys40 together coordinate Zn(2+).

It belongs to the bacterial ribosomal protein bL31 family. Type A subfamily. Part of the 50S ribosomal subunit. It depends on Zn(2+) as a cofactor.

Functionally, binds the 23S rRNA. This is Large ribosomal subunit protein bL31 from Pasteurella multocida (strain Pm70).